A 91-amino-acid polypeptide reads, in one-letter code: Progonadoliberin-1 (91 aa).

The signal sequence occupies residues 1 to 21 (MVVKTWMPWLLVSSVLSQGCC). At Gln-22 the chain carries Pyrrolidone carboxylic acid. The residue at position 31 (Gly-31) is a Glycine amide.

This sequence belongs to the GnRH family. In terms of tissue distribution, expressed in the cell bodies of a cluster of neurons in the preoptic region.

It localises to the secreted. Its function is as follows. Stimulates the secretion of gonadotropins. In Oryzias latipes (Japanese rice fish), this protein is Progonadoliberin-1 (gnrh1).